Reading from the N-terminus, the 778-residue chain is LPS-assembly protein LptD (778 aa).

A signal peptide spans 1 to 23; sequence MKTRYSVLSVAMTAAFYTQYAQA.

It belongs to the LptD family. As to quaternary structure, component of the lipopolysaccharide transport and assembly complex. Interacts with LptE and LptA.

The protein localises to the cell outer membrane. Functionally, together with LptE, is involved in the assembly of lipopolysaccharide (LPS) at the surface of the outer membrane. This Actinobacillus pleuropneumoniae serotype 5b (strain L20) protein is LPS-assembly protein LptD.